We begin with the raw amino-acid sequence, 815 residues long: Cell division control protein 53 (815 aa).

Positions 9 to 280 (DDLEATWNFI…WDDHTKKPLS (272 aa)) are required for interaction with SKP1/CBF3D and F-box protein. A required for interaction with CDC34/UBC3 region spans residues 448 to 748 (KKATKPEVAS…IEKELNTERQ (301 aa)). One can recognise a Cullin neddylation domain in the interval 746-807 (ERQIFLEACI…QKGYLQRGDD (62 aa)). Residue K760 forms a Glycyl lysine isopeptide (Lys-Gly) (interchain with G-Cter in NEDD8) linkage.

It belongs to the cullin family. As to quaternary structure, component of multiple SCF (SKP1-CUL1-F-box) E3 ubiquitin-protein ligase complexes formed of CUL1, SKP1/HRT1, RBX1 and a variable F-box domain-containing protein as substrate-specific adapter. Component of the SCF(CDC4) complex containing CDC4. Component of the SCF(MET30) complex containing MET30. Component of the SCF(GRR1) complex containing GRR1. Component of the probable SCF(DIA2) complex containing DIA2. Component of the probable SCF(YDR131C) complex containing YDR131C. Component of the probable SCF(YDR306C) complex containing YDR306C. Component of the probable SCF(YLR224W) complex containing YLR224W. Component of the probable SCF(YJL149W) complex containing YJL149W. Component of the probable SCF(YNL311C) complex containing YNL311C. Component of the probable SCF(MDM30) complex containing MDM30. Component of the probable SCF(UFO1) complex containing UFO1. Component of the probable SCF(HRT3) complex containing HRT3. Component of the probable SCF(YBR280C) complex containing YBR280C. Component of the probable SCF(YBR352W) complex containing YBR352W. Interacts with DCN1, YBR280C, YLR224W and YLR352W. The unneddylated form interacts with LAG2/CAND1 and the interaction mediates the exchange of the F-box substrate-specific subunit. In terms of processing, neddylated; enhancing the ubiquitin-ligase activity.

It is found in the cytoplasm. The protein resides in the nucleus. Functionally, core component of multiple cullin-RING-based SCF (SKP1-CUL1-F-box) E3 ubiquitin-protein ligase complexes which mediate the ubiquitination and subsequent proteasomal degradation of target proteins. As a scaffold protein may contribute to catalysis through positioning of the substrate and the ubiquitin-conjugating enzyme. The SCF complex associates with CDC34 as the E2 ubiquitin-conjugating enzyme. The functional specificity of the SCF complex depends on the type of F-box protein. SCF(CDC4) controls the G1-to-S phase transition; it directs ubiquitination of the phosphorylated CDK inhibitor SIC1 and of CDC6. SCF(CDC4) directs ubiquitination of GCN4. SCF(GRR1) directs ubiquitination of phosphorylated CLN1, CLN2 and GIC2. SCF(MET30) directs ubiquitination of MET4. SCF(DIA2) is specifically involved in the pheromone induced degradation of phosphorylated TEC1. SCF(MDM30) seems to direct ubiquitination of FZ01. Involved in the regulation of methionine biosynthesis genes. The protein is Cell division control protein 53 (CDC53) of Saccharomyces cerevisiae (strain ATCC 204508 / S288c) (Baker's yeast).